The chain runs to 360 residues: Phenylalanine--tRNA ligase alpha subunit (360 aa).

Glu260 lines the Mg(2+) pocket.

It belongs to the class-II aminoacyl-tRNA synthetase family. Phe-tRNA synthetase alpha subunit type 1 subfamily. As to quaternary structure, tetramer of two alpha and two beta subunits. Requires Mg(2+) as cofactor.

It localises to the cytoplasm. It carries out the reaction tRNA(Phe) + L-phenylalanine + ATP = L-phenylalanyl-tRNA(Phe) + AMP + diphosphate + H(+). In Methylocella silvestris (strain DSM 15510 / CIP 108128 / LMG 27833 / NCIMB 13906 / BL2), this protein is Phenylalanine--tRNA ligase alpha subunit.